Reading from the N-terminus, the 120-residue chain is Aspartate 1-decarboxylase (120 aa).

Serine 24 (schiff-base intermediate with substrate; via pyruvic acid) is an active-site residue. The residue at position 24 (serine 24) is a Pyruvic acid (Ser). Substrate is bound at residue threonine 56. Tyrosine 57 functions as the Proton donor in the catalytic mechanism. 70–72 (GAA) is a substrate binding site.

The protein belongs to the PanD family. In terms of assembly, heterooctamer of four alpha and four beta subunits. Pyruvate serves as cofactor. In terms of processing, is synthesized initially as an inactive proenzyme, which is activated by self-cleavage at a specific serine bond to produce a beta-subunit with a hydroxyl group at its C-terminus and an alpha-subunit with a pyruvoyl group at its N-terminus.

Its subcellular location is the cytoplasm. It catalyses the reaction L-aspartate + H(+) = beta-alanine + CO2. Its pathway is cofactor biosynthesis; (R)-pantothenate biosynthesis; beta-alanine from L-aspartate: step 1/1. Functionally, catalyzes the pyruvoyl-dependent decarboxylation of aspartate to produce beta-alanine. In Pyrobaculum islandicum (strain DSM 4184 / JCM 9189 / GEO3), this protein is Aspartate 1-decarboxylase.